A 494-amino-acid polypeptide reads, in one-letter code: 4-trimethylaminobutyraldehyde dehydrogenase (494 aa).

Residue Ser2 is modified to N-acetylserine. Residue Lys30 is modified to N6-acetyllysine; alternate. Lys30 carries the post-translational modification N6-succinyllysine; alternate. At Lys59 the chain carries N6-succinyllysine. Residues Lys180 and 232-236 (GSVPT) each bind NAD(+). The active-site Proton acceptor is Glu254. Catalysis depends on Cys288, which acts as the Nucleophile. Lys298 bears the N6-acetyllysine mark. Glu391 contacts NAD(+).

It belongs to the aldehyde dehydrogenase family. As to quaternary structure, homotetramer. In terms of tissue distribution, detected in lever (at protein level).

The protein resides in the cytoplasm. It localises to the cytosol. The catalysed reaction is 4-(trimethylamino)butanal + NAD(+) + H2O = 4-(trimethylamino)butanoate + NADH + 2 H(+). The enzyme catalyses an aldehyde + NAD(+) + H2O = a carboxylate + NADH + 2 H(+). It carries out the reaction 4-aminobutanal + NAD(+) + H2O = 4-aminobutanoate + NADH + 2 H(+). It catalyses the reaction formaldehyde + NAD(+) + H2O = formate + NADH + 2 H(+). The catalysed reaction is acetaldehyde + NAD(+) + H2O = acetate + NADH + 2 H(+). The enzyme catalyses imidazole-4-acetaldehyde + NAD(+) + H2O = imidazole-4-acetate + NADH + 2 H(+). It carries out the reaction acrolein + NAD(+) + H2O = acrylate + NADH + 2 H(+). It catalyses the reaction (5-hydroxyindol-3-yl)acetaldehyde + NAD(+) + H2O = (5-hydroxyindol-3-yl)acetate + NADH + 2 H(+). The catalysed reaction is 3,4-dihydroxyphenylacetaldehyde + NAD(+) + H2O = 3,4-dihydroxyphenylacetate + NADH + 2 H(+). The enzyme catalyses spermine monoaldehyde + NAD(+) + H2O = N-(2-carboxyethyl)spermidine + NADH + 2 H(+). It carries out the reaction propanal + NAD(+) + H2O = propanoate + NADH + 2 H(+). It catalyses the reaction butanal + NAD(+) + H2O = butanoate + NADH + 2 H(+). The catalysed reaction is pentanal + NAD(+) + H2O = pentanoate + NADH + 2 H(+). The enzyme catalyses hexanal + NAD(+) + H2O = hexanoate + NADH + 2 H(+). Its pathway is amine and polyamine biosynthesis; carnitine biosynthesis. In terms of biological role, converts gamma-trimethylaminobutyraldehyde into gamma-butyrobetaine with high efficiency (in vitro). Can catalyze the irreversible oxidation of a broad range of aldehydes to the corresponding acids in an NAD-dependent reaction, but with low efficiency. Catalyzes the oxidation of aldehydes arising from biogenic amines and polyamines. This is 4-trimethylaminobutyraldehyde dehydrogenase (Aldh9a1) from Rattus norvegicus (Rat).